Consider the following 218-residue polypeptide: Deoxyribose-phosphate aldolase (218 aa).

The Proton donor/acceptor role is filled by Asp89. The active-site Schiff-base intermediate with acetaldehyde is Lys152. Residue Lys182 is the Proton donor/acceptor of the active site.

Belongs to the DeoC/FbaB aldolase family. DeoC type 1 subfamily.

The protein localises to the cytoplasm. The enzyme catalyses 2-deoxy-D-ribose 5-phosphate = D-glyceraldehyde 3-phosphate + acetaldehyde. It participates in carbohydrate degradation; 2-deoxy-D-ribose 1-phosphate degradation; D-glyceraldehyde 3-phosphate and acetaldehyde from 2-deoxy-alpha-D-ribose 1-phosphate: step 2/2. Functionally, catalyzes a reversible aldol reaction between acetaldehyde and D-glyceraldehyde 3-phosphate to generate 2-deoxy-D-ribose 5-phosphate. In Corynebacterium diphtheriae (strain ATCC 700971 / NCTC 13129 / Biotype gravis), this protein is Deoxyribose-phosphate aldolase.